Reading from the N-terminus, the 550-residue chain is Cytochrome P450 monooxygenase hasH (550 aa).

A helical transmembrane segment spans residues 39 to 59 (IGVLASIVVLVTVVIGPKAVI). A heme-binding site is contributed by C493.

The protein belongs to the cytochrome P450 family. The cofactor is heme.

The protein localises to the membrane. The protein operates within secondary metabolite biosynthesis. Its function is as follows. Cytochrome P450 monooxygenase; part of the gene cluster that mediates the biosynthesis of hexadehydro-astechrome (HAS), a tryptophan-derived iron(III)-complex that acts as a virulence factor in infected mice. Within the pathway, hasH, with the O-methyltransferase hasC and the FAD-linked oxidoreductase hasG, convert the hasE-prenylated Trp-Ala dipeptide into an O-methylated diketopiperazine that is then released from the hasD NRPS. The HAS biosynthesis begins with the synthesis of a tethered Trp-Ala dipeptide by the NRPS hasD. The 7-dimethylallyltryptophan synthase hasE then catalyzes the prenylation of the hasD-tethered tryptophan or the resulting tethered Trp-Ala dipeptide at the C-7 position of the indole moiety. HAS biosynthesis continues via tethered intermediates with the succesive action of the cytochrome P450 monooxygenase hasH, the O-methyltransferase hasC, and the FAD-linked oxidoreductase hasG. The resulting O-methylated diketopiperazine is then released from hasD. Finally, three O-methylated diketopiperazine molecules assemble in a trimeric complex with Fe(III) to produce hexadehydro-astechrome. The chain is Cytochrome P450 monooxygenase hasH from Aspergillus fumigatus (strain CBS 144.89 / FGSC A1163 / CEA10) (Neosartorya fumigata).